Consider the following 123-residue polypeptide: UPF0102 protein VFMJ11_2324 (123 aa).

It belongs to the UPF0102 family.

The polypeptide is UPF0102 protein VFMJ11_2324 (Aliivibrio fischeri (strain MJ11) (Vibrio fischeri)).